Reading from the N-terminus, the 589-residue chain is Aspartate--tRNA(Asp/Asn) ligase (589 aa).

Glu175 provides a ligand contact to L-aspartate. The aspartate stretch occupies residues 199 to 202 (QQLK). Arg221 serves as a coordination point for L-aspartate. ATP-binding positions include 221 to 223 (RDE) and Gln230. His451 contacts L-aspartate. ATP is bound at residue Glu485. Arg492 contacts L-aspartate. 537–540 (GIDR) is an ATP binding site.

This sequence belongs to the class-II aminoacyl-tRNA synthetase family. Type 1 subfamily. Homodimer.

Its subcellular location is the cytoplasm. It catalyses the reaction tRNA(Asx) + L-aspartate + ATP = L-aspartyl-tRNA(Asx) + AMP + diphosphate. Aspartyl-tRNA synthetase with relaxed tRNA specificity since it is able to aspartylate not only its cognate tRNA(Asp) but also tRNA(Asn). Reaction proceeds in two steps: L-aspartate is first activated by ATP to form Asp-AMP and then transferred to the acceptor end of tRNA(Asp/Asn). The chain is Aspartate--tRNA(Asp/Asn) ligase from Roseiflexus sp. (strain RS-1).